The following is an 80-amino-acid chain: Serine palmitoyltransferase small subunit B (80 aa).

Residues 1-11 are Cytoplasmic-facing; it reads MDVKHIKDYLS. Residues 12-29 traverse the membrane as a helical segment; it reads WLYYQYLLITCSYVLEPW. The Lumenal segment spans residues 30–36; that stretch reads EQSIFNT. The chain crosses the membrane as a helical span at residues 37-57; sequence LLLTIIAMVIYSSYIFIPIHV. Over 58–80 the chain is Cytoplasmic; it reads RLAVEFFSGIFGGQHESTVALMS.

This sequence belongs to the SPTSS family. SPTSSB subfamily. In terms of assembly, component of the serine palmitoyltransferase (SPT) complex, which is composed of SPTLC1, SPTLC2 or SPTLC3 and SPTSSA or SPTSSB. The heterodimer consisting of SPTLC1 and SPTLC2/SPTLC3 forms the catalytic core of the enzyme, while SPTSSA or SPTSSB subunits determine substrate specificity. SPT also interacts with ORMDL proteins, especially ORMDL3, which negatively regulate SPT activity in the presence of ceramides.

It is found in the endoplasmic reticulum membrane. It participates in lipid metabolism; sphingolipid metabolism. In terms of biological role, component of the serine palmitoyltransferase multisubunit enzyme (SPT) that catalyzes the initial and rate-limiting step in sphingolipid biosynthesis by condensing L-serine and activated acyl-CoA (most commonly palmitoyl-CoA) to form long-chain bases. The SPT complex is composed of SPTLC1, SPTLC2 or SPTLC3 and SPTSSA or SPTSSB. Within this complex, the heterodimer consisting of SPTLC1 and SPTLC2/SPTLC3 forms the catalytic core. Within the SPT complex, SPTSSB stimulates the catalytic activity and plays a role in substrate specificity. SPT complexes with this subunit showing a preference for longer acyl-CoAs. The SPTLC1-SPTLC2-SPTSSB complex shows a strong preference for C18-CoA substrate, while the SPTLC1-SPTLC3-SPTSSB isozyme displays an ability to use a broader range of acyl-CoAs, without apparent preference. The polypeptide is Serine palmitoyltransferase small subunit B (sptssb) (Xenopus tropicalis (Western clawed frog)).